An 88-amino-acid chain; its full sequence is LYR motif-containing protein 2 (88 aa).

The transit peptide at 1–19 directs the protein to the mitochondrion; sequence MAASRLPPAALTLKQFMRR.

Belongs to the complex I LYR family.

The protein resides in the mitochondrion. Involved in efficient integration of the N-module into mitochondrial respiratory chain complex I. The chain is LYR motif-containing protein 2 (Lyrm2) from Mus musculus (Mouse).